The primary structure comprises 133 residues: Ribosome-binding factor A (133 aa).

It belongs to the RbfA family. In terms of assembly, monomer. Binds 30S ribosomal subunits, but not 50S ribosomal subunits or 70S ribosomes.

The protein resides in the cytoplasm. Functionally, one of several proteins that assist in the late maturation steps of the functional core of the 30S ribosomal subunit. Associates with free 30S ribosomal subunits (but not with 30S subunits that are part of 70S ribosomes or polysomes). Required for efficient processing of 16S rRNA. May interact with the 5'-terminal helix region of 16S rRNA. The chain is Ribosome-binding factor A from Chlamydia muridarum (strain MoPn / Nigg).